A 142-amino-acid polypeptide reads, in one-letter code: Large ribosomal subunit protein uL13 (142 aa).

This sequence belongs to the universal ribosomal protein uL13 family. As to quaternary structure, part of the 50S ribosomal subunit.

This protein is one of the early assembly proteins of the 50S ribosomal subunit, although it is not seen to bind rRNA by itself. It is important during the early stages of 50S assembly. This Dictyoglomus thermophilum (strain ATCC 35947 / DSM 3960 / H-6-12) protein is Large ribosomal subunit protein uL13.